An 810-amino-acid chain; its full sequence is Protein kinase C-binding protein NELL1 (810 aa).

A signal peptide spans M1 to G21. Residues N40, N53, N83, N224, N294, and N372 are each glycosylated (N-linked (GlcNAc...) asparagine). In terms of domain architecture, Laminin G-like spans E64 to C227. A VWFC 1 domain is found at K271–R332. Disulfide bonds link C395/C407, C401/C416, and C418/C432. 3 residues coordinate Ca(2+): D434, I435, and E437. An EGF-like 1; calcium-binding domain is found at D434–T475. Intrachain disulfides connect C438/C451, C445/C460, C462/C474, C480/C493, C487/C502, C504/C515, C519/C529, C523/C535, C537/C546, C553/C566, C560/C575, C577/C594, C600/C613, C607/C622, and C624/C630. The Ca(2+) site is built by N453, L454, and L457. Positions E476–R516 constitute an EGF-like 2; calcium-binding domain. An N-linked (GlcNAc...) asparagine glycan is attached at N511. The region spanning A517–E547 is the EGF-like 3 domain. Positions D549–Y587 constitute an EGF-like 4; calcium-binding domain. N562 is a glycosylation site (N-linked (GlcNAc...) asparagine). An EGF-like 5; calcium-binding domain is found at D596–S631. An N-linked (GlcNAc...) asparagine glycan is attached at N609. The VWFC 2 domain occupies S692–V750. Residues N708, N732, and N758 are each glycosylated (N-linked (GlcNAc...) asparagine).

In terms of assembly, homotrimer. Binds to PKC beta-1. Interacts with ATRAID; the interaction promotes osteoblast cell differentiation and mineralization. Interacts with ROBO3.

It localises to the cytoplasm. Its subcellular location is the nucleus envelope. The protein resides in the secreted. In terms of biological role, plays a role in the control of cell growth and differentiation. Promotes osteoblast cell differentiation and terminal mineralization. In Homo sapiens (Human), this protein is Protein kinase C-binding protein NELL1 (NELL1).